A 63-amino-acid chain; its full sequence is MKVNDRVTVKTDGGPRREGVVLEVEEFSEGVMYLVSLADYPAGVWFFNEVDSQDGTFVEPLSQ.

It belongs to the DsrB family.

This Yersinia pseudotuberculosis serotype O:1b (strain IP 31758) protein is Protein DsrB.